The chain runs to 393 residues: MDSHKSPKETVLITGGGGYFGFRLGCALNLLGVHVILFDISHPAQTIPEGIRFILGDIRCLSDIENAFQGVDVACVFHIASYGMSGREQLNRSLIEEINVGGTDNILQACRRRGVPRLVYTSTFNVIFGGQVIRNGDESLPYLPLHLHPDHYSRTKSIAEKKVLSANGTALERGGGVLSTCALRPAGIYGPGEQRHLPRIVSYIEKGLFRFVYGDPKSLVEFVHVDNLVQAHILASEALKANKGHIAAGQPYFISDGRPVNNFEFFRPLVEGLGYKFPSTRLPLTLIYCFAFLTEMTHFILGRLYNFQPFLTRTEVYKTGVTHYFSLEKARKELGYEAQPFDLQEAVEWFKAHGHGRRPGSCDSKCLVWDGLVILLVVTVVLVWLLPSVILSM.

Residue Tyr152 is the Proton acceptor of the active site. Lys156 lines the NAD(+) pocket. 2 helical membrane passes run 282 to 302 (LPLT…FILG) and 371 to 391 (GLVI…SVIL).

This sequence belongs to the 3-beta-HSD family.

The protein resides in the membrane. The polypeptide is Short-chain dehydrogenase/reductase family 42E member 1 (SDR42E1) (Bos taurus (Bovine)).